Here is a 2628-residue protein sequence, read N- to C-terminus: Hemagglutinin A (2628 aa).

The signal sequence occupies residues 1–24; the sequence is MRKLNSLFSLAVLLSLLCWGQTAA. Peptidase C25-like regions lie at residues 25–539, 540–995, 996–1451, 1452–1907, and 2074–2628; these read AQGG…TPPP, GGTS…TPPP, and IDAD…LAVK. Disordered stretches follow at residues 493–512, 520–546, 944–1002, 1400–1458, 1856–1881, 1890–1909, and 2336–2358; these read WDAPNGTPNPNPGTTTLSES, SWKTIDADGDGNNWTTTPPPGGTSFAG, KWDA…SFAG, KWDAPNGTPNPNPNPNPGTTTLSESF, KTIDADGDGNNWTTTPPPGG, and SSWKTIDADGDGNNWTTTPPPGG. A compositionally biased stretch (low complexity) spans 496-508; that stretch reads PNGTPNPNPGTTT.

The protein belongs to the peptidase C25 family.

In terms of biological role, agglutinates erythrocytes. This Porphyromonas gingivalis (Bacteroides gingivalis) protein is Hemagglutinin A (hagA).